Consider the following 307-residue polypeptide: Salivary glue protein Sgs-3 (307 aa).

The N-terminal stretch at 1–23 (MKLTIATALASILLIGSANVANC) is a signal peptide. The tract at residues 56-257 (APPTQQSTTQ…PTTTKPTTPK (202 aa)) is disordered.

Post-translationally, O-glycosylated by Pgnat9 in salivary glands. Specifically expressed in the salivary gland.

Its subcellular location is the secreted. The protein is Salivary glue protein Sgs-3 of Drosophila melanogaster (Fruit fly).